The sequence spans 49 residues: MRVGVTLACTECKRRNYTTTKNKKNDPNRIEMKKYCRFCQTHTLHKETR.

It belongs to the bacterial ribosomal protein bL33 family.

This chain is Large ribosomal subunit protein bL33, found in Pelotomaculum thermopropionicum (strain DSM 13744 / JCM 10971 / SI).